The sequence spans 498 residues: Calcium-binding tyrosine phosphorylation-regulated protein (498 aa).

Residues 12–49 form the RIIa domain; that stretch reads YGLKTLLEGVSRAILKINPPNITQFAAVYFKELIVFRE. Disordered regions lie at residues 74-107, 135-164, and 247-279; these read GTTQEKEPECMEEQVETSVVSQEPTRMEKSTDTE, EETPEAACGGSPKPSTPKAVTPPSSPSPAA, and VDLGPKPKDDEAEPTTASSFPLQDEQDPPAYDQ. A compositionally biased stretch (low complexity) spans 145-164; the sequence is SPKPSTPKAVTPPSSPSPAA.

In terms of assembly, interacts with FSCB. Phosphorylated on tyrosine residues during in vitro capacitation. Dephosphorylation affects its ability to bind calcium. In terms of tissue distribution, expressed in testis.

The protein resides in the cytoplasm. It is found in the cytoskeleton. It localises to the cell projection. The protein localises to the cilium. Its subcellular location is the flagellum. Its function is as follows. May function as a regulator of both motility- and head-associated functions such as capacitation and the acrosome reaction. Binds calcium in vitro. This Vulpes vulpes (Red fox) protein is Calcium-binding tyrosine phosphorylation-regulated protein (CABYR).